The chain runs to 621 residues: DnaJ homolog subfamily C member 2 (621 aa).

At M1 the chain carries N-acetylmethionine. A phosphoserine mark is found at S47, S49, S60, and S63. Residues 88-161 (DHYAVLGLGH…VKRRAFNSVD (74 aa)) enclose the J domain. The interval 160–250 (VDPTFDNSVP…RDERRWIEKQ (91 aa)) is ZRF1-UBD. At S183 the chain carries Phosphoserine. Disordered stretches follow at residues 294 to 315 (EKKAKAEAKRKEQEAKEKQRQA) and 427 to 453 (EEAEAHMRQASKNTEKSAGGGGNGSKN). SANT domains follow at residues 449 to 511 (NGSK…KLDP) and 549 to 604 (TDFT…EMVK).

In terms of assembly, component of ribosome-associated complex (RAC), a heterodimer composed of Hsp70/DnaK-type chaperone HSPA14 and Hsp40/DnaJ-type chaperone DNAJC2. Interacts (via ZRF1-UBD region) with ID1. Phosphorylated in M (mitotic) phase.

The protein resides in the nucleus. It localises to the cytoplasm. The protein localises to the cytosol. Functionally, acts both as a chaperone in the cytosol and as a chromatin regulator in the nucleus. When cytosolic, acts as a molecular chaperone: component of the ribosome-associated complex (RAC), a complex involved in folding or maintaining nascent polypeptides in a folding-competent state. In the RAC complex, stimulates the ATPase activity of the ribosome-associated pool of Hsp70-type chaperones HSPA14 that bind to the nascent polypeptide chain. When nuclear, mediates the switching from polycomb-repressed genes to an active state: specifically recruited at histone H2A ubiquitinated at 'Lys-119' (H2AK119ub), and promotes the displacement of the polycomb PRC1 complex from chromatin, thereby facilitating transcription activation. This Macaca fascicularis (Crab-eating macaque) protein is DnaJ homolog subfamily C member 2 (DNAJC2).